We begin with the raw amino-acid sequence, 1211 residues long: MASQLQVFSPPSVSSSAFCSAKKLKIEPSGWDVSGQSSNDKYYTHSKTLPATQGQASSSHQVANFNIPAYDQGLLLQAPAVEHIVVTAADSSGSAATATFQSSQTLTHRSNVSLLEPYQKCGLKRKSEEVDSNGSVQIIEEHPPLMLQNRTVVGAAATTTTVTTKSSSSSGEGDYQLVQHEILCSMTNSYEVLEFLGRGTFGQVAKCWKRSTKEIVAIKILKNHPSYARQGQIEVSILSRLSSENADEYNFVRSYECFQHKNHTCLVFEMLEQNLYDFLKQNKFSPLPLKYIRPILQQVATALMKLKSLGLIHADLKPENIMLVDPVRQPYRVKVIDFGSASHVSKAVCSTYLQSRYYRAPEIILGLPFCEAIDMWSLGCVIAELFLGWPLYPGASEYDQIRYISQTQGLPAEYLLSAGTKTTRFFNRDPNLGYPLWRLKTPEEHELETGIKSKEARKYIFNCLDDMAQVNMSTDLEGTDMLAEKADRREYIDLLKKMLTIDADKRVTPLKTLNHQFVTMTHLLDFPHSNHVKSCFQNMEICKRRVHMYDTVSQIKSPFTTHVAPSTSTNLTMSFSNQLSTVHNQASVLASSSTAAAATLSLANSDVSLLNYQSALYPPSAAPVPGVAQQGVSLQPGTTQICTQTDPFQQTFIVCPPAFQTGLQATTKHSGFPVRMDNAVPLVPQAPAAQPLQIQSGVLTQGSCTPLMVATLHPQVATITPQYAVPFTLSCAAGRPALVEQTAAVQQAWPGGTQQILLPSAWQQLPGVALHNSVQPTAVIPEAMGSSQQLADWRNAHSHGNQYSTIMQQPSLLTNHVTLATAQPLNVGVAHVVRQQQSSSLPSRKNKQSAPVSSTSSLEVLPSQVYSLVGSSPLRTTSSYNSLVPVQDQHQPIIIPDTPSPPVSVITIRSDTDEEEDNKFKPSSSSLKARSNVISYVTVNDSPDSDSSLSSPYPTDTLSALRGNSGTLLEGPGRTAADGIGTRTIIVPPLKTQLGDCTGATQASGLLSSSKTKPVASVSGQSSGCCITPTGYRAQRGGASAVQPLNLSQNQQSSSASTSQERSSNPAPRRQQAFVAPLSQAPYAFQHGSPLHSTGHPHLAPAPAHLPSQPHLYTYAAPTSAAALGSTSSIAHLFSPQGSSRHAAAYTTHPSTLVHQVPVSVGPSLLTSASVAPAQYQHQFATQSYIGSSRGSTIYTGYPLSPTKISQYSYL.

A Glycyl lysine isopeptide (Lys-Gly) (interchain with G-Cter in SUMO); alternate cross-link involves residue lysine 25. Lysine 25 is covalently cross-linked (Glycyl lysine isopeptide (Lys-Gly) (interchain with G-Cter in SUMO2); alternate). Glycyl lysine isopeptide (Lys-Gly) (interchain with G-Cter in SUMO2) cross-links involve residues lysine 120 and lysine 124. In terms of domain architecture, Protein kinase spans 190-518 (YEVLEFLGRG…PLKTLNHQFV (329 aa)). ATP contacts are provided by residues 196 to 204 (LGRGTFGQV) and lysine 219. Residue aspartate 315 is the Proton acceptor of the active site. Residues 835–856 (QQQSSSLPSRKNKQSAPVSSTS) are disordered. Positions 844-847 (RKNK) match the Nuclear localization signal 1 (NLS1) motif. The residue at position 872 (serine 872) is a Phosphoserine. An interaction with TP53 region spans residues 885-1094 (PVQDQHQPII…FQHGSPLHST (210 aa)). Residues 891-998 (QPIIIPDTPS…PLKTQLGDCT (108 aa)) form a required for localization to nuclear speckles region. Residues 902-926 (PVSVITIRSDTDEEEDNKFKPSSSS) are SUMO interaction motifs (SIM); required for nuclear localization and kinase activity. Lysine 991 participates in a covalent cross-link: Glycyl lysine isopeptide (Lys-Gly) (interchain with G-Cter in SUMO2). Disordered regions lie at residues 1002–1023 (QASGLLSSSKTKPVASVSGQSS), 1047–1070 (LSQNQQSSSASTSQERSSNPAPRR), and 1085–1105 (FQHGSPLHSTGHPHLAPAPAH). Composition is skewed to low complexity over residues 1048–1064 (SQNQQSSSASTSQERSS) and 1096–1105 (HPHLAPAPAH). Phosphoserine is present on serine 1201. A Glycyl lysine isopeptide (Lys-Gly) (interchain with G-Cter in SUMO) cross-link involves residue lysine 1204.

The protein belongs to the protein kinase superfamily. CMGC Ser/Thr protein kinase family. HIPK subfamily. In terms of assembly, interacts with Nkx1-2, Nkx2-5, MYB, PARK7, DAXX and p53/TP53. Part of a cytoplasmic complex made of HIPK1, DAB2IP and MAP3K5 in response to TNF. This complex formation promotes MAP3K5-JNK activation and subsequent apoptosis. Phosphorylated and activated by JNK1. Autophosphorylated. Post-translationally, sumoylated. When conjugated it is directed to nuclear speckles. SENP1-mediated desumoylation is mediated by TNF in response to stress stimuli, triggering transient translocation from nucleus to cytoplasm.

Its subcellular location is the nucleus. The protein resides in the cytoplasm. The protein localises to the nucleus speckle. It catalyses the reaction L-seryl-[protein] + ATP = O-phospho-L-seryl-[protein] + ADP + H(+). It carries out the reaction L-threonyl-[protein] + ATP = O-phospho-L-threonyl-[protein] + ADP + H(+). Functionally, serine/threonine-protein kinase involved in transcription regulation and TNF-mediated cellular apoptosis. Plays a role as a corepressor for homeodomain transcription factors. Phosphorylates DAXX and MYB. Phosphorylates DAXX in response to stress, and mediates its translocation from the nucleus to the cytoplasm. Inactivates MYB transcription factor activity by phosphorylation. Prevents MAP3K5-JNK activation in the absence of TNF. TNF triggers its translocation to the cytoplasm in response to stress stimuli, thus activating nuclear MAP3K5-JNK by derepression and promoting apoptosis. May be involved in anti-oxidative stress responses. Involved in the regulation of eye size, lens formation and retinal lamination during late embryogenesis. Promotes angiogenesis and to be involved in erythroid differentiation. May be involved in malignant squamous cell tumor formation. Phosphorylates PAGE4 at 'Thr-51' which is critical for the ability of PAGE4 to potentiate the transcriptional activator activity of JUN. The protein is Homeodomain-interacting protein kinase 1 of Rattus norvegicus (Rat).